Reading from the N-terminus, the 377-residue chain is Protein-arginine rhamnosyltransferase (377 aa).

Residue tyrosine 15 coordinates dTDP-beta-L-rhamnose. The Proton acceptor role is filled by aspartate 17. DTDP-beta-L-rhamnose is bound by residues tyrosine 193, glutamine 255, and 271-275 (RGEDS). Residue glutamate 273 is part of the active site.

This sequence belongs to the glycosyltransferase 104 family.

The catalysed reaction is dTDP-beta-L-rhamnose + L-arginyl-[protein] = N(omega)-(alpha-L-rhamnosyl)-L-arginyl-[protein] + dTDP + H(+). Protein-arginine rhamnosyltransferase that catalyzes the transfer of a single rhamnose to elongation factor P (EF-P) on 'Lys-32', a modification required for EF-P-dependent rescue of polyproline stalled ribosomes. The protein is Protein-arginine rhamnosyltransferase of Pseudomonas putida (strain ATCC 47054 / DSM 6125 / CFBP 8728 / NCIMB 11950 / KT2440).